A 74-amino-acid polypeptide reads, in one-letter code: Sec-independent protein translocase protein TatA (74 aa).

Residues 1–21 (MGTFSIWHWLIVLLVVVVVFG) traverse the membrane as a helical segment. Residues 50–74 (TAPAGQVANQSTADQTIDVQTKPKG) form a disordered region. Over residues 56–68 (VANQSTADQTIDV) the composition is skewed to polar residues.

This sequence belongs to the TatA/E family. In terms of assembly, the Tat system comprises two distinct complexes: a TatABC complex, containing multiple copies of TatA, TatB and TatC subunits, and a separate TatA complex, containing only TatA subunits. Substrates initially bind to the TatABC complex, which probably triggers association of the separate TatA complex to form the active translocon.

The protein localises to the cell inner membrane. Functionally, part of the twin-arginine translocation (Tat) system that transports large folded proteins containing a characteristic twin-arginine motif in their signal peptide across membranes. TatA could form the protein-conducting channel of the Tat system. The protein is Sec-independent protein translocase protein TatA of Verminephrobacter eiseniae (strain EF01-2).